Consider the following 323-residue polypeptide: 1-aminocyclopropane-1-carboxylate oxidase 4 (323 aa).

Position 1 is an N-acetylmethionine (Met1). A Fe2OG dioxygenase domain is found at 153-254 (PTFGTKVSNY…RMSIASFYNP (102 aa)). 3 residues coordinate Fe cation: His177, Asp179, and His234. Arg245 contributes to the 2-oxoglutarate binding site.

This sequence belongs to the iron/ascorbate-dependent oxidoreductase family. It depends on Fe cation as a cofactor. As to expression, expressed in vegetative tissues. Expressed constitutively at a low level in leaves and blades.

The enzyme catalyses 1-aminocyclopropane-1-carboxylate + L-ascorbate + O2 = ethene + L-dehydroascorbate + hydrogen cyanide + CO2 + 2 H2O. It functions in the pathway alkene biosynthesis; ethylene biosynthesis via S-adenosyl-L-methionine; ethylene from S-adenosyl-L-methionine: step 2/2. In terms of biological role, enzyme involved in the ethylene biosynthesis. May promote stem elongation by maximizing the extensibility cells, possibly by activating ethylene biosynthesis, in response to very-long-chain fatty acids (VLCFAs C20:0 to C30:0). The polypeptide is 1-aminocyclopropane-1-carboxylate oxidase 4 (ACO4) (Arabidopsis thaliana (Mouse-ear cress)).